The following is a 230-amino-acid chain: Cell division ATP-binding protein FtsE (230 aa).

In terms of domain architecture, ABC transporter spans 4–229 (IEMRDVVKKY…DESKGEYGYD (226 aa)). 37-44 (GPSGAGKS) serves as a coordination point for ATP.

This sequence belongs to the ABC transporter superfamily. As to quaternary structure, homodimer. Interacts with FtsX; forms a membrane-associated complex. Interacts with pcsB.

Its subcellular location is the cell membrane. The enzyme catalyses ATP + H2O = ADP + phosphate + H(+). Functionally, part of the ABC transporter FtsEX involved in cellular division. Has ATPase activity. Essential for cell division and viability. The protein is Cell division ATP-binding protein FtsE of Streptococcus pneumoniae serotype 2 (strain D39 / NCTC 7466).